A 302-amino-acid chain; its full sequence is Sulfate adenylyltransferase subunit 2 (302 aa).

Residues 280 to 302 form a disordered region; the sequence is RQGRLIDSDQSASMEQKKRQGYF.

This sequence belongs to the PAPS reductase family. CysD subfamily. Heterodimer composed of CysD, the smaller subunit, and CysN.

It catalyses the reaction sulfate + ATP + H(+) = adenosine 5'-phosphosulfate + diphosphate. It participates in sulfur metabolism; hydrogen sulfide biosynthesis; sulfite from sulfate: step 1/3. In terms of biological role, with CysN forms the ATP sulfurylase (ATPS) that catalyzes the adenylation of sulfate producing adenosine 5'-phosphosulfate (APS) and diphosphate, the first enzymatic step in sulfur assimilation pathway. APS synthesis involves the formation of a high-energy phosphoric-sulfuric acid anhydride bond driven by GTP hydrolysis by CysN coupled to ATP hydrolysis by CysD. In Shewanella baltica (strain OS223), this protein is Sulfate adenylyltransferase subunit 2.